The primary structure comprises 187 residues: UPF0398 protein SAB1311c (187 aa).

It belongs to the UPF0398 family.

This is UPF0398 protein SAB1311c from Staphylococcus aureus (strain bovine RF122 / ET3-1).